The chain runs to 93 residues: YcgL domain-containing protein AHA_2135 (93 aa).

Positions 1-85 (MLCAVYKSRK…PPENLLEQHK (85 aa)) constitute a YcgL domain.

The sequence is that of YcgL domain-containing protein AHA_2135 from Aeromonas hydrophila subsp. hydrophila (strain ATCC 7966 / DSM 30187 / BCRC 13018 / CCUG 14551 / JCM 1027 / KCTC 2358 / NCIMB 9240 / NCTC 8049).